Here is a 110-residue protein sequence, read N- to C-terminus: Small ubiquitin-related modifier 3 (110 aa).

Residues Lys5 and Lys7 each participate in a glycyl lysine isopeptide (Lys-Gly) (interchain with G-Cter in SUMO2) cross-link. Lys11 is covalently cross-linked (Glycyl lysine isopeptide (Lys-Gly) (interchain with G-Cter in SUMO); alternate). Lys11 participates in a covalent cross-link: Glycyl lysine isopeptide (Lys-Gly) (interchain with G-Cter in SUMO2); alternate. Residues 15–92 (DHINLKVAGQ…IDVFQQQTGG (78 aa)) form the Ubiquitin-like domain. Positions 88 to 101 (QQTGGSASRGSVPT) are enriched in polar residues. The disordered stretch occupies residues 88-110 (QQTGGSASRGSVPTPNRCPDLCY). Residue Gly92 forms a Glycyl lysine isopeptide (Gly-Lys) (interchain with K-? in acceptor proteins) linkage. The propeptide occupies 93 to 110 (SASRGSVPTPNRCPDLCY).

The protein belongs to the ubiquitin family. SUMO subfamily. As to quaternary structure, interacts with SAE2 and UBE2I. Covalently attached to a number of proteins. Interacts with USP25 (via ts SIM domain); the interaction sumoylates USP25 and inhibits its ubiquitin hydrolyzing activity. Interacts with BMAL1. Post-translationally, polymeric chains can be formed through Lys-11 cross-linking. Cleavage of precursor form by SENP1, SENP2 or SENP5 is necessary for function.

The protein localises to the cytoplasm. It localises to the nucleus. The protein resides in the PML body. In terms of biological role, ubiquitin-like protein which can be covalently attached to target lysines either as a monomer or as a lysine-linked polymer. Does not seem to be involved in protein degradation and may function as an antagonist of ubiquitin in the degradation process. Plays a role in a number of cellular processes such as nuclear transport, DNA replication and repair, mitosis and signal transduction. Covalent attachment to its substrates requires prior activation by the E1 complex SAE1-SAE2 and linkage to the E2 enzyme UBE2I, and can be promoted by an E3 ligase such as PIAS1-4, RANBP2 or CBX4. Plays a role in the regulation of sumoylation status of SETX. The chain is Small ubiquitin-related modifier 3 from Mus musculus (Mouse).